Consider the following 304-residue polypeptide: dTDP-4-dehydrorhamnose reductase (304 aa).

NADH contacts are provided by residues 16–18 (GML), 42–43 (DI), and 66–68 (AWT). NADPH contacts are provided by residues 17 to 18 (ML), 42 to 43 (DI), and 66 to 68 (AWT). 107–108 (TD) contacts dTDP-beta-L-rhamnose. Residues Tyr-131 and Lys-135 each coordinate NADH. Tyr-131 and Lys-135 together coordinate NADPH. Tyr-131 (proton donor/acceptor) is an active-site residue. Trp-157 serves as a coordination point for dTDP-beta-L-rhamnose.

It belongs to the dTDP-4-dehydrorhamnose reductase family. In terms of assembly, homodimer. The cofactor is Mg(2+).

The catalysed reaction is dTDP-beta-L-rhamnose + NADP(+) = dTDP-4-dehydro-beta-L-rhamnose + NADPH + H(+). Its pathway is carbohydrate biosynthesis; dTDP-L-rhamnose biosynthesis. It functions in the pathway antibiotic biosynthesis; streptomycin biosynthesis. Involved in the biosynthesis of the streptose moiety of streptomycin. Catalyzes the reduction of dTDP-6-deoxy-L-lyxo-4-hexulose to yield dTDP-L-rhamnose. RmlD uses NADH and NADPH nearly equally well. The polypeptide is dTDP-4-dehydrorhamnose reductase (Streptomyces griseus).